A 225-amino-acid polypeptide reads, in one-letter code: Biosynthetic peptidoglycan transglycosylase (225 aa).

Residues 7–27 (SFLFKMVLILLIAPIVLVGVV) form a helical membrane-spanning segment.

The protein belongs to the glycosyltransferase 51 family.

It is found in the cell inner membrane. It catalyses the reaction [GlcNAc-(1-&gt;4)-Mur2Ac(oyl-L-Ala-gamma-D-Glu-L-Lys-D-Ala-D-Ala)](n)-di-trans,octa-cis-undecaprenyl diphosphate + beta-D-GlcNAc-(1-&gt;4)-Mur2Ac(oyl-L-Ala-gamma-D-Glu-L-Lys-D-Ala-D-Ala)-di-trans,octa-cis-undecaprenyl diphosphate = [GlcNAc-(1-&gt;4)-Mur2Ac(oyl-L-Ala-gamma-D-Glu-L-Lys-D-Ala-D-Ala)](n+1)-di-trans,octa-cis-undecaprenyl diphosphate + di-trans,octa-cis-undecaprenyl diphosphate + H(+). It functions in the pathway cell wall biogenesis; peptidoglycan biosynthesis. Peptidoglycan polymerase that catalyzes glycan chain elongation from lipid-linked precursors. The protein is Biosynthetic peptidoglycan transglycosylase of Vibrio parahaemolyticus serotype O3:K6 (strain RIMD 2210633).